A 186-amino-acid polypeptide reads, in one-letter code: Ribosome-recycling factor (186 aa).

Belongs to the RRF family.

Its subcellular location is the cytoplasm. Its function is as follows. Responsible for the release of ribosomes from messenger RNA at the termination of protein biosynthesis. May increase the efficiency of translation by recycling ribosomes from one round of translation to another. This is Ribosome-recycling factor from Polaromonas sp. (strain JS666 / ATCC BAA-500).